The sequence spans 601 residues: DNA ligase (601 aa).

Aspartate 258 lines the ATP pocket. Residue lysine 260 is the N6-AMP-lysine intermediate of the active site. Arginine 265, arginine 280, glutamate 310, phenylalanine 350, arginine 427, and lysine 433 together coordinate ATP. The disordered stretch occupies residues 568-601; it reads DKSPEDATTTDEILEMYNKQPKKKIESPPIDESV.

The protein belongs to the ATP-dependent DNA ligase family. Requires Mg(2+) as cofactor.

It catalyses the reaction ATP + (deoxyribonucleotide)n-3'-hydroxyl + 5'-phospho-(deoxyribonucleotide)m = (deoxyribonucleotide)n+m + AMP + diphosphate.. DNA ligase that seals nicks in double-stranded DNA during DNA replication, DNA recombination and DNA repair. The chain is DNA ligase from Saccharolobus islandicus (strain L.S.2.15 / Lassen #1) (Sulfolobus islandicus).